A 489-amino-acid polypeptide reads, in one-letter code: Penton protein (489 aa).

This sequence belongs to the adenoviridae penton family. In terms of assembly, interacts with the fiber protein (via N-terminal tail region). Interacts with the capsid vertex protein; this interaction binds the penton base to neighboring peripentonal hexons.

It localises to the virion. The protein localises to the host nucleus. Its function is as follows. Major capsid protein that self-associates to form penton base pentamers, each in the shape of a pentagon, situated at the 12 vertices of the pseudo T=25 capsid. Involved in virus secondary attachment to host cell after initial attachment by the fiber protein, and in endocytosis of virions. As the virus enters the host cell, penton proteins are shed concomitant with virion acidification in the endosome. In Murine adenovirus A serotype 1 (MAdV-1), this protein is Penton protein.